The sequence spans 194 residues: Ion-translocating oxidoreductase complex subunit B (194 aa).

Positions 1 to 26 (MSSILIAVIAISALALVFGLILGFAS) are hydrophobic. The 59-residue stretch at 32–90 (ESDPIVDQIDSILPQTQCGQCGYPGCKPYAEAIANGDTINKCPPGGQATIEKLADLMGV) folds into the 4Fe-4S domain. 12 residues coordinate [4Fe-4S] cluster: Cys49, Cys52, Cys57, Cys73, Cys114, Cys117, Cys120, Cys124, Cys144, Cys147, Cys150, and Cys154. 2 consecutive 4Fe-4S ferredoxin-type domains span residues 105–134 (KIAF…GGTK) and 135–164 (ALHT…MIPV).

The protein belongs to the 4Fe4S bacterial-type ferredoxin family. RnfB subfamily. In terms of assembly, the complex is composed of six subunits: RnfA, RnfB, RnfC, RnfD, RnfE and RnfG. The cofactor is [4Fe-4S] cluster.

It is found in the cell inner membrane. In terms of biological role, part of a membrane-bound complex that couples electron transfer with translocation of ions across the membrane. The protein is Ion-translocating oxidoreductase complex subunit B of Aliivibrio salmonicida (strain LFI1238) (Vibrio salmonicida (strain LFI1238)).